Reading from the N-terminus, the 432-residue chain is D-amino acid dehydrogenase (432 aa).

3–17 (VVILGSGVVGVASAW) contributes to the FAD binding site.

It belongs to the DadA oxidoreductase family. Requires FAD as cofactor.

It catalyses the reaction a D-alpha-amino acid + A + H2O = a 2-oxocarboxylate + AH2 + NH4(+). It participates in amino-acid degradation; D-alanine degradation; NH(3) and pyruvate from D-alanine: step 1/1. Oxidative deamination of D-amino acids. This Shigella boydii serotype 4 (strain Sb227) protein is D-amino acid dehydrogenase.